The following is a 123-amino-acid chain: Small ribosomal subunit protein uS12 (123 aa).

A 3-methylthioaspartic acid modification is found at D89.

Belongs to the universal ribosomal protein uS12 family. In terms of assembly, part of the 30S ribosomal subunit. Contacts proteins S8 and S17. May interact with IF1 in the 30S initiation complex.

With S4 and S5 plays an important role in translational accuracy. Functionally, interacts with and stabilizes bases of the 16S rRNA that are involved in tRNA selection in the A site and with the mRNA backbone. Located at the interface of the 30S and 50S subunits, it traverses the body of the 30S subunit contacting proteins on the other side and probably holding the rRNA structure together. The combined cluster of proteins S8, S12 and S17 appears to hold together the shoulder and platform of the 30S subunit. The protein is Small ribosomal subunit protein uS12 of Methylobacterium radiotolerans (strain ATCC 27329 / DSM 1819 / JCM 2831 / NBRC 15690 / NCIMB 10815 / 0-1).